The primary structure comprises 91 residues: MARSLKKGPFVADHLLRKVEKLNAKGDKQVIKTWSRASTILPQMIGHTIAVHNGRQHVPVYVTEQMVGHKLGEFAPTRTFRGHTKDKKAGR.

This sequence belongs to the universal ribosomal protein uS19 family.

Its function is as follows. Protein S19 forms a complex with S13 that binds strongly to the 16S ribosomal RNA. The chain is Small ribosomal subunit protein uS19 from Synechococcus elongatus (strain ATCC 33912 / PCC 7942 / FACHB-805) (Anacystis nidulans R2).